Here is a 172-residue protein sequence, read N- to C-terminus: Nicotinamide-nucleotide adenylyltransferase (172 aa).

This sequence belongs to the archaeal NMN adenylyltransferase family.

It is found in the cytoplasm. It carries out the reaction beta-nicotinamide D-ribonucleotide + ATP + H(+) = diphosphate + NAD(+). Its pathway is cofactor biosynthesis; NAD(+) biosynthesis; NAD(+) from nicotinamide D-ribonucleotide: step 1/1. This Sulfurisphaera tokodaii (strain DSM 16993 / JCM 10545 / NBRC 100140 / 7) (Sulfolobus tokodaii) protein is Nicotinamide-nucleotide adenylyltransferase.